The primary structure comprises 406 residues: uncharacterized protein (406 aa).

The protein belongs to the mycobacterial PPE family.

This is an uncharacterized protein from Mycobacterium tuberculosis (strain CDC 1551 / Oshkosh).